The primary structure comprises 598 residues: Polypeptide N-acetylgalactosaminyltransferase 17 (598 aa).

The Cytoplasmic portion of the chain corresponds to 1–6; that stretch reads MASLRR. A helical; Signal-anchor for type II membrane protein transmembrane segment spans residues 7–27; sequence VKVLLVLNLIAVAGFVLFLAK. Residues 28-598 lie on the Lumenal side of the membrane; sequence CRPIAVRSGD…QRWTIKNSIK (571 aa). The N-linked (GlcNAc...) asparagine glycan is linked to N50. 2 disulfide bridges follow: C142-C373 and C364-C443. A catalytic subdomain A region spans residues 151–262; it reads LPQISIIFIF…AGWAEPVLSR (112 aa). 2 residues coordinate substrate: D192 and R223. 3 residues coordinate Mn(2+): D246, H248, and H378. The interval 319-381 is catalytic subdomain B; it reads PIRTPAMIGC…PCSRVAHIER (63 aa). The substrate site is built by R381 and Y386. Residues N461 and N486 are each glycosylated (N-linked (GlcNAc...) asparagine). The 130-residue stretch at 465-594 folds into the Ricin B-type lectin domain; sequence AYGELRNNKA…SCTGQRWTIK (130 aa). 3 disulfides stabilise this stretch: C478–C494, C526–C541, and C568–C586.

This sequence belongs to the glycosyltransferase 2 family. GalNAc-T subfamily. Mn(2+) is required as a cofactor. Highly expressed in brain and heart. Weakly expressed in kidney, liver, lung and spleen.

Its subcellular location is the golgi apparatus membrane. The catalysed reaction is L-seryl-[protein] + UDP-N-acetyl-alpha-D-galactosamine = a 3-O-[N-acetyl-alpha-D-galactosaminyl]-L-seryl-[protein] + UDP + H(+). It carries out the reaction L-threonyl-[protein] + UDP-N-acetyl-alpha-D-galactosamine = a 3-O-[N-acetyl-alpha-D-galactosaminyl]-L-threonyl-[protein] + UDP + H(+). It functions in the pathway protein modification; protein glycosylation. Functionally, may catalyze the initial reaction in O-linked oligosaccharide biosynthesis, the transfer of an N-acetyl-D-galactosamine residue to a serine or threonine residue on the protein receptor. In Homo sapiens (Human), this protein is Polypeptide N-acetylgalactosaminyltransferase 17.